The chain runs to 224 residues: Ribonuclease HII (224 aa).

The 210-residue stretch at 1-210 folds into the RNase H type-2 domain; that stretch reads MKIGGIDEAG…VRKIEESIKA (210 aa). A divalent metal cation-binding residues include aspartate 7, glutamate 8, and aspartate 105.

This sequence belongs to the RNase HII family. The cofactor is Mn(2+). Mg(2+) is required as a cofactor.

The protein resides in the cytoplasm. It carries out the reaction Endonucleolytic cleavage to 5'-phosphomonoester.. In terms of biological role, endonuclease that specifically degrades the RNA of RNA-DNA hybrids. This is Ribonuclease HII from Pyrococcus furiosus (strain ATCC 43587 / DSM 3638 / JCM 8422 / Vc1).